The primary structure comprises 936 residues: Bifunctional uridylyltransferase/uridylyl-removing enzyme (936 aa).

Residues Met1–Arg372 form a uridylyltransferase region. The tract at residues Asn373–Ser727 is uridylyl-removing. Residues Thr488–Leu610 form the HD domain. 2 consecutive ACT domains span residues Glu728–Arg809 and Val840–Arg915. Residues Arg915 to Ala930 show a composition bias toward basic and acidic residues. Residues Arg915–Ala936 form a disordered region.

Belongs to the GlnD family. Mg(2+) serves as cofactor.

The enzyme catalyses [protein-PII]-L-tyrosine + UTP = [protein-PII]-uridylyl-L-tyrosine + diphosphate. It carries out the reaction [protein-PII]-uridylyl-L-tyrosine + H2O = [protein-PII]-L-tyrosine + UMP + H(+). With respect to regulation, uridylyltransferase (UTase) activity is inhibited by glutamine, while glutamine activates uridylyl-removing (UR) activity. Its function is as follows. Modifies, by uridylylation and deuridylylation, the PII regulatory proteins (GlnB and homologs), in response to the nitrogen status of the cell that GlnD senses through the glutamine level. Under low glutamine levels, catalyzes the conversion of the PII proteins and UTP to PII-UMP and PPi, while under higher glutamine levels, GlnD hydrolyzes PII-UMP to PII and UMP (deuridylylation). Thus, controls uridylylation state and activity of the PII proteins, and plays an important role in the regulation of nitrogen fixation and metabolism. This Rhodospirillum rubrum (strain ATCC 11170 / ATH 1.1.1 / DSM 467 / LMG 4362 / NCIMB 8255 / S1) protein is Bifunctional uridylyltransferase/uridylyl-removing enzyme.